The following is a 291-amino-acid chain: tRNA-uridine aminocarboxypropyltransferase 1 (291 aa).

The tract at residues 158-181 is disordered; it reads KNSAYEPSSKRPKFSPENDKNTYE. The segment covering 171–181 has biased composition (basic and acidic residues); that stretch reads FSPENDKNTYE. Residues 199–202 carry the DXTW motif; it reads DSTW.

Belongs to the TDD superfamily. DTWD1 family.

The protein resides in the nucleus. The catalysed reaction is a uridine in tRNA + S-adenosyl-L-methionine = a 3-[(3S)-3-amino-3-carboxypropyl]uridine in tRNA + S-methyl-5'-thioadenosine + H(+). In terms of biological role, catalyzes the formation of 3-(3-amino-3-carboxypropyl)uridine (acp3U) at position 20 in the D-loop of several cytoplasmic tRNAs (acp3U(20)). This chain is tRNA-uridine aminocarboxypropyltransferase 1, found in Xenopus laevis (African clawed frog).